We begin with the raw amino-acid sequence, 61 residues long: Metallothionein-1C (61 aa).

The beta stretch occupies residues 1–29 (MDPNCSCSTGGSCSCAGSCTCKACRCTSC). Positions 5, 7, 13, 15, 19, 21, 24, 26, 29, 33, 34, 36, 37, 41, 44, 48, 50, 57, 59, and 60 each coordinate a divalent metal cation. The alpha stretch occupies residues 30 to 61 (KKSCCSCCPAGCARCAQGCICKGASDKCSCCA).

It belongs to the metallothionein superfamily. Type 1 family. As to quaternary structure, monomer.

Its function is as follows. Metallothioneins have a high content of cysteine residues that bind various heavy metals; these proteins are transcriptionally regulated by both heavy metals and glucocorticoids. This is Metallothionein-1C (MT1C) from Sus scrofa (Pig).